Here is a 398-residue protein sequence, read N- to C-terminus: Isopenicillin N epimerase (398 aa).

Lys-219 bears the N6-(pyridoxal phosphate)lysine mark. The segment at 243 to 264 is disordered; the sequence is PQVSWGYRPDGENPSDERNRFG. Residues 251–264 show a composition bias toward basic and acidic residues; it reads PDGENPSDERNRFG.

The protein belongs to the class-V pyridoxal-phosphate-dependent aminotransferase family. It depends on pyridoxal 5'-phosphate as a cofactor.

It catalyses the reaction isopenicillin N = penicillin N. Its pathway is antibiotic biosynthesis; cephalosporin C biosynthesis. In terms of biological role, catalyzes the reversible isomerization between isopenicillin N and penicillin N. In Amycolatopsis lactamdurans (Nocardia lactamdurans), this protein is Isopenicillin N epimerase (cefD).